Reading from the N-terminus, the 1269-residue chain is Protein strawberry notch homolog 1 (1269 aa).

A disordered region spans residues Asn-21 to Pro-47. The residue at position 113 (Lys-113) is an N6-acetyllysine. Phosphoserine is present on residues Ser-126 and Ser-178. Lys-377 bears the N6-acetyllysine mark. A disordered region spans residues Pro-652 to Glu-725. A phosphoserine mark is found at Ser-656, Ser-657, and Ser-661. Residues Ser-679 to Tyr-693 are compositionally biased toward acidic residues. Ser-700 and Ser-701 each carry phosphoserine. Residues Thr-719–Pro-746 are a coiled coil. The residue at position 1098 (Lys-1098) is an N6-acetyllysine. Ser-1262 carries the post-translational modification Phosphoserine.

Belongs to the SBNO family.

The protein resides in the nucleus. In terms of biological role, plays a crucial role in the regulation of neural stem cells (NSCs) proliferation. Enhances the phosphorylation of GSK3B through the PI3K-Akt signaling pathway, thereby upregulating the Wnt/beta-catenin signaling pathway and promoting the proliferation of NSCs. Improves ischemic stroke recovery while inhibiting neuroinflammation through small extracellular vesicles (sEVs)-mediated mechanism. Enhances the secretion of sEVs from NSCs, which in turn inhibit both the MAPK and NF-kappaB pathways in microglia. This inhibition suppresses the pro-inflammatory M1 polarization of microglia, promoting a shift towards the M2 anti-inflammatory phenotype, which is beneficial for reducing neuroinflammation. The polypeptide is Protein strawberry notch homolog 1 (Sbno1) (Rattus norvegicus (Rat)).